Reading from the N-terminus, the 182-residue chain is CASP-like protein 5B1 (182 aa).

The segment at glycine 1–aspartate 20 is disordered. At glycine 1–threonine 41 the chain is on the cytoplasmic side. A helical transmembrane segment spans residues valine 42–methionine 62. At valine 63–alanine 73 the chain is on the extracellular side. An N-linked (GlcNAc...) asparagine glycan is attached at asparagine 70. Residues phenylalanine 74–isoleucine 94 traverse the membrane as a helical segment. At aspartate 95–serine 108 the chain is on the cytoplasmic side. A helical transmembrane segment spans residues isoleucine 109–alanine 129. Residues cysteine 130 to threonine 159 are Extracellular-facing. Residues methionine 160–valine 180 traverse the membrane as a helical segment. At serine 181–glutamate 182 the chain is on the cytoplasmic side.

Belongs to the Casparian strip membrane proteins (CASP) family. In terms of assembly, homodimer and heterodimers.

The protein localises to the cell membrane. In Picea sitchensis (Sitka spruce), this protein is CASP-like protein 5B1.